We begin with the raw amino-acid sequence, 337 residues long: F420-dependent glucose-6-phosphate dehydrogenase (337 aa).

Aspartate 40 serves as a coordination point for coenzyme F420-(gamma-Glu)n. The Proton donor role is filled by histidine 41. Coenzyme F420-(gamma-Glu)n contacts are provided by residues threonine 77 and 108 to 109 (TG). The active-site Proton acceptor is glutamate 110. Coenzyme F420-(gamma-Glu)n contacts are provided by residues asparagine 113, 178–179 (GG), and 181–182 (VV). Residues threonine 196, lysine 199, lysine 260, and arginine 284 each coordinate substrate.

It belongs to the F420-dependent glucose-6-phosphate dehydrogenase family. As to quaternary structure, homodimer.

It carries out the reaction oxidized coenzyme F420-(gamma-L-Glu)(n) + D-glucose 6-phosphate + H(+) = 6-phospho-D-glucono-1,5-lactone + reduced coenzyme F420-(gamma-L-Glu)(n). In terms of biological role, catalyzes the coenzyme F420-dependent oxidation of glucose 6-phosphate (G6P) to 6-phosphogluconolactone. The polypeptide is F420-dependent glucose-6-phosphate dehydrogenase (Rhodococcus hoagii (strain 103S) (Rhodococcus equi)).